A 117-amino-acid chain; its full sequence is Large ribosomal subunit protein bL17 (117 aa).

It belongs to the bacterial ribosomal protein bL17 family. As to quaternary structure, part of the 50S ribosomal subunit. Contacts protein L32.

This is Large ribosomal subunit protein bL17 from Campylobacter lari (strain RM2100 / D67 / ATCC BAA-1060).